Here is a 253-residue protein sequence, read N- to C-terminus: Fatty acid elongase 5 (253 aa).

The next 7 helical transmembrane spans lie at 24-44 (IFVSWSVLVGAHVGYIVLVII), 60-80 (IMMIYNVTQIYISAIMAISLA), 100-120 (FWIFVHYCSKFLDMFDTVLMI), 127-147 (QLSFLHIYHHATIGFIWGLLL), 150-170 (GIGNGTAFFGAWVNSAVHFLM), 188-208 (ILTKIQMFQFFLCIVQASLAP), and 214-234 (FALQWSFLQLTYHITLFILFL). Residues 132–136 (HIYHH) carry the HxxHH motif motif. Catalysis depends on His-135, which acts as the Nucleophile.

It belongs to the ELO family.

It is found in the membrane. It carries out the reaction an acyl-CoA + malonyl-CoA + H(+) = a 3-oxoacyl-CoA + CO2 + CoA. It functions in the pathway lipid metabolism; polyunsaturated fatty acid biosynthesis. Its function is as follows. Involved in the synthesis of fatty acids. Elongates C20 polyunsaturated fatty acids (PUFAs) with a preference for n-6 PUFAs. The chain is Fatty acid elongase 5 from Trypanosoma cruzi (strain CL Brener).